We begin with the raw amino-acid sequence, 141 residues long: Probable mitochondrial pyruvate carrier 1 (141 aa).

2 consecutive transmembrane segments (helical) span residues 31 to 52 and 60 to 82; these read YLCS…AAIL and LISG…YAWM.

The protein belongs to the mitochondrial pyruvate carrier (MPC) (TC 2.A.105) family. As to quaternary structure, the functional 150 kDa pyruvate import complex is a heteromer of mpc1 and mpc2.

It is found in the mitochondrion. It localises to the mitochondrion inner membrane. In terms of biological role, mediates the uptake of pyruvate into mitochondria. The polypeptide is Probable mitochondrial pyruvate carrier 1 (Schizosaccharomyces pombe (strain 972 / ATCC 24843) (Fission yeast)).